The following is a 417-amino-acid chain: UDP-N-acetylglucosamine 1-carboxyvinyltransferase (417 aa).

Lys23 to Asn24 contributes to the phosphoenolpyruvate binding site. Residue Arg93 coordinates UDP-N-acetyl-alpha-D-glucosamine. Catalysis depends on Asp117, which acts as the Proton donor. Positions 305 and 327 each coordinate UDP-N-acetyl-alpha-D-glucosamine.

It belongs to the EPSP synthase family. MurA subfamily.

Its subcellular location is the cytoplasm. The catalysed reaction is phosphoenolpyruvate + UDP-N-acetyl-alpha-D-glucosamine = UDP-N-acetyl-3-O-(1-carboxyvinyl)-alpha-D-glucosamine + phosphate. The protein operates within cell wall biogenesis; peptidoglycan biosynthesis. In terms of biological role, cell wall formation. Adds enolpyruvyl to UDP-N-acetylglucosamine. The polypeptide is UDP-N-acetylglucosamine 1-carboxyvinyltransferase (Mycolicibacterium paratuberculosis (strain ATCC BAA-968 / K-10) (Mycobacterium paratuberculosis)).